A 260-amino-acid chain; its full sequence is tRNA pseudouridine synthase A (260 aa).

Catalysis depends on Asp-52, which acts as the Nucleophile. Residue Tyr-111 coordinates substrate.

This sequence belongs to the tRNA pseudouridine synthase TruA family. As to quaternary structure, homodimer.

The catalysed reaction is uridine(38/39/40) in tRNA = pseudouridine(38/39/40) in tRNA. In terms of biological role, formation of pseudouridine at positions 38, 39 and 40 in the anticodon stem and loop of transfer RNAs. The chain is tRNA pseudouridine synthase A from Beijerinckia indica subsp. indica (strain ATCC 9039 / DSM 1715 / NCIMB 8712).